A 142-amino-acid polypeptide reads, in one-letter code: Serine protease inhibitor (142 aa).

Serine 1 bears the N-acetylserine mark.

In terms of biological role, serine protease inhibitor. Active against beta-trypsin and alpha-chymotrypsin with dissociation constants of 0.35 nM and 40 nM respectively. Inhibits factor XIa, but not other enzymes involved in coagulation and fibrinolysis. Does not inhibit subtilisin, lysyl endopeptidase, arginyl endopeptidase or papain. In Lentinula edodes (Shiitake mushroom), this protein is Serine protease inhibitor.